The sequence spans 254 residues: MTTIDLNCDLGESFGAYKMGNDDEILPFVSSINVACGFHAGDPAVMRQTVEKALQHNVAIGAHPGFPDLIGFGRRNMSVSASEVYDYVLYQIGALDGFVKAAGGKMQHVKPHGALYNMAVTDSEIADAIAKAIYHINPGLLLYGLANSEAFIKATEKYNITLVQEAFADRTYKQDGTLTSRTEENALIKNEDEAIKQVLQMVKEGYVESVNGGKVAVQAQTICLHGDGEKAVQFAEKIYRTFKLNGISICAPNK.

The protein belongs to the LamB/PxpA family. As to quaternary structure, forms a complex composed of PxpA, PxpB and PxpC.

The enzyme catalyses 5-oxo-L-proline + ATP + 2 H2O = L-glutamate + ADP + phosphate + H(+). Functionally, catalyzes the cleavage of 5-oxoproline to form L-glutamate coupled to the hydrolysis of ATP to ADP and inorganic phosphate. The polypeptide is 5-oxoprolinase subunit A (Bacillus mycoides (strain KBAB4) (Bacillus weihenstephanensis)).